The chain runs to 431 residues: MPQITRSIELFEKAKKFIPGGVNSPVRAFKSVGGTPIYMAKGSGAYMTDVDGNTYLDYVGSWGPFILGSMHPRITAALEYTLKNIGTSFGTPIEMEIEIAELLCQIVPSLEMVRMVNSGTEATMSAVRLARGYTGRDKIIKFEGCYHGHGDSFLIKAGSGALTLGAPDSPGVTKGTAQDTLNATYNDIESVKLLVQENKGNVAAIIIEPVAGNTGVIPAQPGFLAALRQLCDEEGIVLIFDEVMCGFRVALGGAQSLYGVTPDLTTMGKIIGGGLPVGAFGGKRKLMERVAPLGDVYQAGTLSGNPLALTAGLETLKILMDENPYPELERKAVILEEGFKANLAKLGLNYVQNRVGSMSCLFFTETPVVNYTTAITADTKKHAKYFHSLLDQGIYTAPSQFEAMFISSVMTDEDLDKTIKANYNALVASQQ.

Residue Lys-269 is modified to N6-(pyridoxal phosphate)lysine.

This sequence belongs to the class-III pyridoxal-phosphate-dependent aminotransferase family. HemL subfamily. Homodimer. Pyridoxal 5'-phosphate serves as cofactor.

The protein resides in the cytoplasm. It catalyses the reaction (S)-4-amino-5-oxopentanoate = 5-aminolevulinate. It functions in the pathway porphyrin-containing compound metabolism; protoporphyrin-IX biosynthesis; 5-aminolevulinate from L-glutamyl-tRNA(Glu): step 2/2. It participates in porphyrin-containing compound metabolism; chlorophyll biosynthesis. In Chlorobium chlorochromatii (strain CaD3), this protein is Glutamate-1-semialdehyde 2,1-aminomutase.